We begin with the raw amino-acid sequence, 208 residues long: V-type ATP synthase subunit D (208 aa).

Belongs to the V-ATPase D subunit family.

Functionally, produces ATP from ADP in the presence of a proton gradient across the membrane. In Streptococcus pyogenes serotype M3 (strain ATCC BAA-595 / MGAS315), this protein is V-type ATP synthase subunit D.